The chain runs to 277 residues: Thymidylate synthase (277 aa).

Residue arginine 21 participates in dUMP binding. Residue histidine 51 participates in (6R)-5,10-methylene-5,6,7,8-tetrahydrofolate binding. DUMP is bound at residue 126–127 (RR). Cysteine 159 (nucleophile) is an active-site residue. DUMP is bound by residues 179-182 (RSAD), asparagine 190, and 220-222 (HLY). Aspartate 182 lines the (6R)-5,10-methylene-5,6,7,8-tetrahydrofolate pocket. Position 276 (serine 276) interacts with (6R)-5,10-methylene-5,6,7,8-tetrahydrofolate.

Belongs to the thymidylate synthase family. Bacterial-type ThyA subfamily. As to quaternary structure, homodimer.

The protein localises to the cytoplasm. The catalysed reaction is dUMP + (6R)-5,10-methylene-5,6,7,8-tetrahydrofolate = 7,8-dihydrofolate + dTMP. It participates in pyrimidine metabolism; dTTP biosynthesis. Its function is as follows. Catalyzes the reductive methylation of 2'-deoxyuridine-5'-monophosphate (dUMP) to 2'-deoxythymidine-5'-monophosphate (dTMP) while utilizing 5,10-methylenetetrahydrofolate (mTHF) as the methyl donor and reductant in the reaction, yielding dihydrofolate (DHF) as a by-product. This enzymatic reaction provides an intracellular de novo source of dTMP, an essential precursor for DNA biosynthesis. The sequence is that of Thymidylate synthase from Teredinibacter turnerae (strain ATCC 39867 / T7901).